The following is a 101-amino-acid chain: Small ribosomal subunit protein uS14A (101 aa).

This sequence belongs to the universal ribosomal protein uS14 family. Part of the 30S ribosomal subunit. Contacts proteins S3 and S10.

Binds 16S rRNA, required for the assembly of 30S particles and may also be responsible for determining the conformation of the 16S rRNA at the A site. This Mycolicibacterium smegmatis (strain ATCC 700084 / mc(2)155) (Mycobacterium smegmatis) protein is Small ribosomal subunit protein uS14A.